Consider the following 452-residue polypeptide: Ribosome biogenesis protein YTM1 (452 aa).

The ubiquitin-like (UBL) domain stretch occupies residues 17 to 98 (IVSQPVVFTT…EETLEIEYIE (82 aa)). WD repeat units lie at residues 110–148 (PHED…TASI), 150–195 (AHPA…NPMA), and 208–247 (LHTA…TDEV). A disordered region spans residues 245 to 269 (DEVPEPALNERDRSKKRRRVEEGEV). Residues 252-269 (LNERDRSKKRRRVEEGEV) are compositionally biased toward basic and acidic residues. 4 WD repeats span residues 282–322 (SHTA…CSHT), 325–364 (ASEK…TILT), 371–411 (MHPS…SAMA), and 418–452 (GSGQ…EQKV).

This sequence belongs to the WD repeat WDR12/YTM1 family. Component of the NOP7 complex, composed of ERB1, NOP7 and YTM1. The complex is held together by ERB1, which interacts with NOP7 via its N-terminal domain and with YTM1 via a high-affinity interaction between the seven-bladed beta-propeller domains of the 2 proteins. The NOP7 complex associates with the 66S pre-ribosome. Interacts (via UBL domain) with MDN1 (via VWFA/MIDAS domain).

It localises to the nucleus. The protein localises to the nucleolus. It is found in the nucleoplasm. Its function is as follows. Component of the NOP7 complex, which is required for maturation of the 25S and 5.8S ribosomal RNAs and formation of the 60S ribosome. This Laccaria bicolor (strain S238N-H82 / ATCC MYA-4686) (Bicoloured deceiver) protein is Ribosome biogenesis protein YTM1.